The chain runs to 67 residues: DNA-directed RNA polymerase subunit omega (67 aa).

The protein belongs to the RNA polymerase subunit omega family. In terms of assembly, the RNAP catalytic core consists of 2 alpha, 1 beta, 1 beta' and 1 omega subunit. When a sigma factor is associated with the core the holoenzyme is formed, which can initiate transcription.

The catalysed reaction is RNA(n) + a ribonucleoside 5'-triphosphate = RNA(n+1) + diphosphate. Its function is as follows. Promotes RNA polymerase assembly. Latches the N- and C-terminal regions of the beta' subunit thereby facilitating its interaction with the beta and alpha subunits. In Ralstonia nicotianae (strain ATCC BAA-1114 / GMI1000) (Ralstonia solanacearum), this protein is DNA-directed RNA polymerase subunit omega.